A 957-amino-acid chain; its full sequence is Sorting nexin-13 (957 aa).

The region spanning 97 to 284 is the PXA domain; that stretch reads ANIIDEPLQQ…YVIWMIRDSN (188 aa). Residues 373 to 511 enclose the RGS domain; it reads PLDSILVDNV…SFRQNALYVR (139 aa). One can recognise a PX domain in the interval 559 to 680; sequence VQLHAYISDT…DFLENKAYSK (122 aa). A 1,2-diacyl-sn-glycero-3-phospho-(1D-myo-inositol-3-phosphate) contacts are provided by R601, S603, K628, and R642.

This sequence belongs to the sorting nexin family.

The protein localises to the early endosome membrane. Functionally, may be involved in several stages of intracellular trafficking. Acts as a GAP for Galphas. May play a role in endosome homeostasis. This is Sorting nexin-13 (Snx13) from Mus musculus (Mouse).